Consider the following 170-residue polypeptide: Crossover junction endodeoxyribonuclease RuvC (170 aa).

Residues Asp-9, Glu-70, and Asp-145 contribute to the active site. Asp-9, Glu-70, and Asp-145 together coordinate Mg(2+).

This sequence belongs to the RuvC family. Homodimer which binds Holliday junction (HJ) DNA. The HJ becomes 2-fold symmetrical on binding to RuvC with unstacked arms; it has a different conformation from HJ DNA in complex with RuvA. In the full resolvosome a probable DNA-RuvA(4)-RuvB(12)-RuvC(2) complex forms which resolves the HJ. Mg(2+) is required as a cofactor.

The protein resides in the cytoplasm. It catalyses the reaction Endonucleolytic cleavage at a junction such as a reciprocal single-stranded crossover between two homologous DNA duplexes (Holliday junction).. In terms of biological role, the RuvA-RuvB-RuvC complex processes Holliday junction (HJ) DNA during genetic recombination and DNA repair. Endonuclease that resolves HJ intermediates. Cleaves cruciform DNA by making single-stranded nicks across the HJ at symmetrical positions within the homologous arms, yielding a 5'-phosphate and a 3'-hydroxyl group; requires a central core of homology in the junction. The consensus cleavage sequence is 5'-(A/T)TT(C/G)-3'. Cleavage occurs on the 3'-side of the TT dinucleotide at the point of strand exchange. HJ branch migration catalyzed by RuvA-RuvB allows RuvC to scan DNA until it finds its consensus sequence, where it cleaves and resolves the cruciform DNA. The polypeptide is Crossover junction endodeoxyribonuclease RuvC (Chlamydia trachomatis serovar A (strain ATCC VR-571B / DSM 19440 / HAR-13)).